A 341-amino-acid chain; its full sequence is 4-hydroxy-2-oxovalerate aldolase 2 (341 aa).

The Pyruvate carboxyltransferase domain occupies 8–260; sequence VTVHDMTLRD…ETGVDVAKIT (253 aa). 16–17 contacts substrate; the sequence is RD. Residue Asp17 coordinates Mn(2+). Catalysis depends on His20, which acts as the Proton acceptor. 2 residues coordinate substrate: Ser170 and His199. Mn(2+)-binding residues include His199 and His201. Position 290 (Tyr290) interacts with substrate.

It belongs to the 4-hydroxy-2-oxovalerate aldolase family.

It catalyses the reaction (S)-4-hydroxy-2-oxopentanoate = acetaldehyde + pyruvate. This is 4-hydroxy-2-oxovalerate aldolase 2 from Dechloromonas aromatica (strain RCB).